The sequence spans 397 residues: Nicotinate phosphoribosyltransferase (397 aa).

H221 bears the Phosphohistidine; by autocatalysis mark.

It belongs to the NAPRTase family. In terms of processing, transiently phosphorylated on a His residue during the reaction cycle. Phosphorylation strongly increases the affinity for substrates and increases the rate of nicotinate D-ribonucleotide production. Dephosphorylation regenerates the low-affinity form of the enzyme, leading to product release.

The catalysed reaction is nicotinate + 5-phospho-alpha-D-ribose 1-diphosphate + ATP + H2O = nicotinate beta-D-ribonucleotide + ADP + phosphate + diphosphate. The protein operates within cofactor biosynthesis; NAD(+) biosynthesis; nicotinate D-ribonucleotide from nicotinate: step 1/1. Catalyzes the synthesis of beta-nicotinate D-ribonucleotide from nicotinate and 5-phospho-D-ribose 1-phosphate at the expense of ATP. The chain is Nicotinate phosphoribosyltransferase from Herminiimonas arsenicoxydans.